The chain runs to 215 residues: uncharacterized protein (215 aa).

The signal sequence occupies residues 1–17 (MKKVLASATILSLMLVG). Positions 17-110 (GCSNGGNDES…NKQQQSVQDN (94 aa)) are disordered. A lipid anchor (N-palmitoyl cysteine) is attached at Cys-18. A lipid anchor (S-diacylglycerol cysteine) is attached at Cys-18. The segment covering 25 to 62 (ESSHKDDSSKTEQKDKSSSQHDSKKDSKRNDTNNKQDN) has biased composition (basic and acidic residues). 2 stretches are compositionally biased toward low complexity: residues 63 to 76 (QENNTNKEQTNNQN) and 91 to 110 (NSNGNSSDNQNKQQQSVQDN).

It localises to the cell membrane. This is an uncharacterized protein from Staphylococcus epidermidis (strain ATCC 35984 / DSM 28319 / BCRC 17069 / CCUG 31568 / BM 3577 / RP62A).